Reading from the N-terminus, the 343-residue chain is Versiconal hemiacetal acetate reductase (343 aa).

Tyrosine 59 acts as the Proton donor in catalysis. Histidine 144 contributes to the substrate binding site. 229–239 (SPVARGALARP) lines the NADP(+) pocket.

It belongs to the aldo/keto reductase family. Aldo/keto reductase 2 subfamily.

It catalyses the reaction (2S)-versicolorone + NADP(+) = 1'-hydroxyversicolorone + NADPH + H(+). The enzyme catalyses (3S)-versiconol acetate + NADP(+) = (2S,3S)-versiconal hemiacetal acetate + NADPH + H(+). The catalysed reaction is (S)-versiconol + NADP(+) = (2S-3S)-versiconal hemiacetal + NADPH + H(+). Catalyzes 3 reactions: from hydroxyversicolorone (HVN) to versicolorone (VONE), from versiconal hemiacetal acetate (VHA) to versiconol acetate (VOAc) and from versiconal (VHOH) to versiconol (VOH). Probably not an aflatoxin biosynthesis gene: may be involved in the vertical branching steps connecting the main pathway from HVN to VHOH with the side pathway from VONE to VOH. The chain is Versiconal hemiacetal acetate reductase (vrdA) from Aspergillus parasiticus.